Here is a 143-residue protein sequence, read N- to C-terminus: Periplasmic nitrate reductase, electron transfer subunit (143 aa).

Positions 1–22 (MKKILTLAAIVLAIGGCSGQQA) are cleaved as a signal peptide. Residues His72, Cys85, Cys88, His89, His106, Cys121, Cys124, and His125 each coordinate heme c.

This sequence belongs to the NapB family. Component of the periplasmic nitrate reductase NapAB complex composed of NapA and NapB. Post-translationally, binds 2 heme C groups per subunit.

It localises to the periplasm. In terms of biological role, electron transfer subunit of the periplasmic nitrate reductase complex NapAB. Receives electrons from the membrane-anchored tetraheme c-type CymA protein and transfers these to NapA subunit, thus allowing electron flow between membrane and periplasm. Not essential for nitrate reduction but confers advantage to the organism when grown on nitrate and thereby a fitness gain in utilizing nitrate. This chain is Periplasmic nitrate reductase, electron transfer subunit, found in Shewanella oneidensis (strain ATCC 700550 / JCM 31522 / CIP 106686 / LMG 19005 / NCIMB 14063 / MR-1).